Reading from the N-terminus, the 322-residue chain is Prephenate dehydratase (322 aa).

A Prephenate dehydratase domain is found at 5 to 191 (RIAYLGPEGT…ARTRFVLVGM (187 aa)). The ACT domain maps to 205–282 (SAVLRIDNAP…ADVCYLGSWP (78 aa)). A disordered region spans residues 286–322 (ATGPTVSPPPPDEASRWLARLRAGKPDQASEPGGGKL).

As to quaternary structure, homodimer.

It carries out the reaction prephenate + H(+) = 3-phenylpyruvate + CO2 + H2O. It participates in amino-acid biosynthesis; L-phenylalanine biosynthesis; phenylpyruvate from prephenate: step 1/1. The polypeptide is Prephenate dehydratase (pheA) (Mycobacterium leprae (strain Br4923)).